Reading from the N-terminus, the 140-residue chain is FK506-binding protein 2 (140 aa).

The N-terminal stretch at 1 to 19 (MKFTTGLSVLLFFVLQVFA) is a signal peptide. Residues 43 to 132 (GDVVSVHYTG…IFETELVDIQ (90 aa)) form the PPIase FKBP-type domain.

Belongs to the FKBP-type PPIase family. FKBP2 subfamily.

The protein localises to the endoplasmic reticulum. The enzyme catalyses [protein]-peptidylproline (omega=180) = [protein]-peptidylproline (omega=0). Inhibited by both FK506 and rapamycin. In terms of biological role, PPIases accelerate the folding of proteins. It catalyzes the cis-trans isomerization of proline imidic peptide bonds in oligopeptides. The polypeptide is FK506-binding protein 2 (FPR2) (Kluyveromyces lactis (strain ATCC 8585 / CBS 2359 / DSM 70799 / NBRC 1267 / NRRL Y-1140 / WM37) (Yeast)).